Consider the following 277-residue polypeptide: Ethanolamine ammonia-lyase small subunit (277 aa).

Val-164, Glu-185, and Cys-214 together coordinate adenosylcob(III)alamin.

The protein belongs to the EutC family. In terms of assembly, the basic unit is a heterodimer which dimerizes to form tetramers. The heterotetramers trimerize; 6 large subunits form a core ring with 6 small subunits projecting outwards. Adenosylcob(III)alamin is required as a cofactor.

The protein resides in the bacterial microcompartment. The enzyme catalyses ethanolamine = acetaldehyde + NH4(+). It participates in amine and polyamine degradation; ethanolamine degradation. Its function is as follows. Catalyzes the deamination of various vicinal amino-alcohols to oxo compounds. Allows this organism to utilize ethanolamine as the sole source of nitrogen and carbon in the presence of external vitamin B12. The protein is Ethanolamine ammonia-lyase small subunit of Pseudomonas fluorescens (strain SBW25).